Consider the following 435-residue polypeptide: Putative FBD-associated F-box protein At5g56820 (435 aa).

In terms of domain architecture, F-box spans 14 to 60; it reads SDRISYLPDDLLLRILSFIHTSDAISTSLLSKRWKFVWKMMPTLDLD. Residues 341–390 enclose the FBD domain; sequence VRKPNSVPECLTFHLETLEWQGYAGRPEDKEIAVYILGNALRLNTATISR.

The protein is Putative FBD-associated F-box protein At5g56820 of Arabidopsis thaliana (Mouse-ear cress).